The sequence spans 147 residues: Hemoglobin subunit rho (147 aa).

The Globin domain occupies 3–147; it reads HWSAEEKQLI…VAHALAYKYH (145 aa). Heme b-binding residues include H64 and H93.

This sequence belongs to the globin family.

The rho chain is the major early embryonic beta-type hemoglobin chain. This is Hemoglobin subunit rho from Gallus gallus (Chicken).